Reading from the N-terminus, the 201-residue chain is Potassium-transporting ATPase KdpC subunit (201 aa).

Residues 12–34 form a helical membrane-spanning segment; it reads LLALTMITGLAYPLAVTGLATVL. A disordered region spans residues 73 to 102; that stretch reads TVAPDPADSSKTVSAPYNAANSGGSNLGPT. The segment covering 81–101 has biased composition (polar residues); it reads SSKTVSAPYNAANSGGSNLGP.

Belongs to the KdpC family. In terms of assembly, the system is composed of three essential subunits: KdpA, KdpB and KdpC.

It is found in the cell inner membrane. Functionally, part of the high-affinity ATP-driven potassium transport (or Kdp) system, which catalyzes the hydrolysis of ATP coupled with the electrogenic transport of potassium into the cytoplasm. This subunit acts as a catalytic chaperone that increases the ATP-binding affinity of the ATP-hydrolyzing subunit KdpB by the formation of a transient KdpB/KdpC/ATP ternary complex. This chain is Potassium-transporting ATPase KdpC subunit, found in Rhodopseudomonas palustris (strain ATCC BAA-98 / CGA009).